We begin with the raw amino-acid sequence, 963 residues long: uncharacterized protein (963 aa).

Coiled coils occupy residues N176 to M236 and D373 to V467. Residues I468–I488 form a helical membrane-spanning segment. Coiled coils occupy residues R536–A570 and A647–S789.

It localises to the cell membrane. This is an uncharacterized protein from Bacillus subtilis (strain 168).